The following is a 207-amino-acid chain: Protein N-terminal glutamine amidohydrolase (207 aa).

Residues Cys30, His83, and Asp99 contribute to the active site.

It belongs to the NTAQ1 family. In terms of assembly, monomer.

It localises to the cytoplasm. It is found in the cytosol. The protein resides in the nucleus. The enzyme catalyses N-terminal L-glutaminyl-[protein] + H2O = N-terminal L-glutamyl-[protein] + NH4(+). Its function is as follows. Mediates the side-chain deamidation of N-terminal glutamine residues to glutamate, an important step in N-end rule pathway of protein degradation. Conversion of the resulting N-terminal glutamine to glutamate renders the protein susceptible to arginylation, polyubiquitination and degradation as specified by the N-end rule. Does not act on substrates with internal or C-terminal glutamine and does not act on non-glutamine residues in any position. Does not deaminate acetylated N-terminal glutamine. With the exception of proline, all tested second-position residues on substrate peptides do not greatly influence the activity. In contrast, a proline at position 2, virtually abolishes deamidation of N-terminal glutamine. The sequence is that of Protein N-terminal glutamine amidohydrolase (NTAQ1) from Bos taurus (Bovine).